Reading from the N-terminus, the 229-residue chain is Protein TraJ (229 aa).

The protein resides in the cytoplasm. This protein is essential for positively regulating the expression of transfer genes that are involved in the conjugal transfer of DNA between bacterial cells. The sequence is that of Protein TraJ (traJ) from Escherichia coli (strain K12).